The sequence spans 170 residues: Urease accessory protein UreE (170 aa).

It belongs to the UreE family.

Its subcellular location is the cytoplasm. In terms of biological role, involved in urease metallocenter assembly. Binds nickel. Probably functions as a nickel donor during metallocenter assembly. In Helicobacter pylori (strain HPAG1), this protein is Urease accessory protein UreE.